The chain runs to 312 residues: HPr kinase/phosphorylase (312 aa).

Catalysis depends on residues histidine 141 and lysine 162. Residue 156-163 coordinates ATP; the sequence is GDSGIGKS. Serine 163 serves as a coordination point for Mg(2+). The active-site Proton acceptor; for phosphorylation activity. Proton donor; for dephosphorylation activity is aspartate 180. The interval 204–213 is important for the catalytic mechanism of both phosphorylation and dephosphorylation; sequence LEIRGVGIID. Glutamate 205 is a Mg(2+) binding site. The active site involves arginine 246. The important for the catalytic mechanism of dephosphorylation stretch occupies residues 267-272; the sequence is PVRVGR.

It belongs to the HPrK/P family. In terms of assembly, homohexamer. Mg(2+) serves as cofactor.

The catalysed reaction is [HPr protein]-L-serine + ATP = [HPr protein]-O-phospho-L-serine + ADP + H(+). It catalyses the reaction [HPr protein]-O-phospho-L-serine + phosphate + H(+) = [HPr protein]-L-serine + diphosphate. Its function is as follows. Catalyzes the ATP- as well as the pyrophosphate-dependent phosphorylation of a specific serine residue in HPr, a phosphocarrier protein of the phosphoenolpyruvate-dependent sugar phosphotransferase system (PTS). HprK/P also catalyzes the pyrophosphate-producing, inorganic phosphate-dependent dephosphorylation (phosphorolysis) of seryl-phosphorylated HPr (P-Ser-HPr). The two antagonistic activities of HprK/P are regulated by several intracellular metabolites, which change their concentration in response to the absence or presence of rapidly metabolisable carbon sources (glucose, fructose, etc.) in the growth medium. Therefore, by controlling the phosphorylation state of HPr, HPrK/P is a sensor enzyme that plays a major role in the regulation of carbon metabolism and sugar transport: it mediates carbon catabolite repression (CCR), and regulates PTS-catalyzed carbohydrate uptake and inducer exclusion. The sequence is that of HPr kinase/phosphorylase from Pediococcus pentosaceus (strain ATCC 25745 / CCUG 21536 / LMG 10740 / 183-1w).